The sequence spans 495 residues: NADH-ubiquinone oxidoreductase chain 4 (495 aa).

11 helical membrane-spanning segments follow: residues 9-29 (YSNLSGLILCPVLGSITPLFI), 39-59 (LIGLCASLITFLYSPVPRIQF), 89-109 (ISLFFVILTTFLIPICISVGW), 139-159 (LLLFYVFPESVPIPMFIIIGV), 173-193 (FFLYTLLGSLFMLLAILLILF), 214-234 (IFLWIASFASFAVKVPMVPVH), 272-292 (FPEATLCSTPFIYTLSAIAII), 313-333 (VAHMNLVTIGMFSPNIQGIGG), 335-355 (ILPMLSHGLVPSALFLCVGVL), 367-387 (YGGLVSTMPNLSTIFFSFTLA), and 413-433 (LVATLAALGMILGAAYSLWLY).

It belongs to the complex I subunit 4 family.

Its subcellular location is the mitochondrion membrane. The catalysed reaction is a ubiquinone + NADH + 5 H(+)(in) = a ubiquinol + NAD(+) + 4 H(+)(out). Core subunit of the mitochondrial membrane respiratory chain NADH dehydrogenase (Complex I) that is believed to belong to the minimal assembly required for catalysis. Complex I functions in the transfer of electrons from NADH to the respiratory chain. The immediate electron acceptor for the enzyme is believed to be ubiquinone. This chain is NADH-ubiquinone oxidoreductase chain 4 (ND4), found in Brassica campestris (Field mustard).